The primary structure comprises 1020 residues: X-linked retinitis pigmentosa GTPase regulator (1020 aa).

RCC1 repeat units lie at residues 54–105 (NKLY…STEG), 106–158 (GNVY…LTED), 159–208 (GRLF…VTTD), 209–261 (GELY…LTEN), 262–313 (AVYT…ITDI), and 314–367 (GLMY…FAAP). Ser418 and Ser518 each carry phosphoserine. Disordered regions lie at residues 609-776 (HENN…IISK), 790-906 (EIPE…KEKA), and 989-1020 (DNKD…CTIL). Composition is skewed to basic and acidic residues over residues 618 to 636 (LDAK…QKES), 644 to 665 (EKET…EKST), 685 to 698 (EENK…ESCK), 704 to 715 (DSERESVEKPDS), 760 to 771 (KLIEQGNEKETK), 790 to 802 (EIPE…EDSK), 816 to 853 (ENVK…LKLE), and 883 to 906 (SKTE…KEKA). Residues 996–1009 (NHMSQNHQNIPPTN) show a composition bias toward polar residues. A Cysteine methyl ester modification is found at Cys1017. The S-geranylgeranyl cysteine moiety is linked to residue Cys1017. The propeptide at 1018–1020 (TIL) is removed in mature form.

In terms of assembly, interacts with SPATA7. Interacts with CEP290. Interacts with WHRN. Interacts with PDE6D. Interacts with RPGRIP1. Interacts with RPGRIP1L. PDE6D, RPGRIP1 and RPGRIP1L may compete for the same binding sites. Interacts with RAB37 and RAB8A (in GDP-bound forms); functions as GEF for RAB37 and RAB8A. Isoform 6 interacts with NPM1 (via C-terminus). Isoform 6 interacts with SMC1A and SMC3. In terms of processing, prenylated. As to expression, heart, brain, placenta, lung, liver, muscle, kidney, retina, pancreas and fetal retinal pigment epithelium. Isoform 3 is found only in the retina. Colocalizes with RPGRIP1 in the outer segment of rod photoreceptors and cone outer segments.

It localises to the cytoplasm. It is found in the cytoskeleton. Its subcellular location is the flagellum axoneme. The protein localises to the golgi apparatus. The protein resides in the cell projection. It localises to the cilium. It is found in the microtubule organizing center. Its subcellular location is the centrosome. The protein localises to the cilium basal body. The protein resides in the cilium axoneme. Acts as a guanine-nucleotide releasing factor (GEF) for RAB8A and RAB37 by promoting the conversion of inactive RAB-GDP to the active form RAB-GTP. GEF activity towards RAB8A may facilitate ciliary trafficking by modulating ciliary intracellular localization of RAB8A. GEF activity towards RAB37 maintains autophagic homeostasis and retinal function. Involved in photoreceptor integrity. May control cilia formation by regulating actin stress filaments and cell contractility. May be involved in microtubule organization and regulation of transport in primary cilia. May play a critical role in spermatogenesis and in intraflagellar transport processes. The sequence is that of X-linked retinitis pigmentosa GTPase regulator from Homo sapiens (Human).